Here is a 321-residue protein sequence, read N- to C-terminus: Glucokinase (321 aa).

8 to 13 (GDVGGT) is a binding site for ATP.

Belongs to the bacterial glucokinase family.

It is found in the cytoplasm. The enzyme catalyses D-glucose + ATP = D-glucose 6-phosphate + ADP + H(+). The protein is Glucokinase of Salmonella paratyphi B (strain ATCC BAA-1250 / SPB7).